The primary structure comprises 458 residues: Opine oxidase subunit A (458 aa).

It to T-protein and to dimethylglycine dehydrogenase. Heterodimer of a subunit A and a subunit B.

Its pathway is opine metabolism; octopine degradation. Functionally, oxidative cleavage of octopine into L-arginine and pyruvate. The protein is Opine oxidase subunit A (ooxA) of Rhizobium meliloti (strain 1021) (Ensifer meliloti).